A 108-amino-acid chain; its full sequence is FK506-binding protein 1 (108 aa).

Positions 20-108 (GDNVTIHYVG…KFEVELLKVN (89 aa)) constitute a PPIase FKBP-type domain.

It belongs to the FKBP-type PPIase family. FKBP1 subfamily.

It is found in the cytoplasm. It carries out the reaction [protein]-peptidylproline (omega=180) = [protein]-peptidylproline (omega=0). With respect to regulation, inhibited by both FK506 and rapamycin. Functionally, PPIases accelerate the folding of proteins. It catalyzes the cis-trans isomerization of proline imidic peptide bonds in oligopeptides. The sequence is that of FK506-binding protein 1 (FRR1) from Cryptococcus neoformans var. grubii serotype A (strain H99 / ATCC 208821 / CBS 10515 / FGSC 9487) (Filobasidiella neoformans var. grubii).